A 243-amino-acid chain; its full sequence is Venom nerve growth factor (243 aa).

Residues 1–18 (MSMLCYTLIIVFLIGIWA) form the signal peptide. Residues 19–125 (APKSEDNVPL…TLNRNIRAKR (107 aa)) constitute a propeptide that is removed on maturation. Residues 47–66 (GLKTSRNTDQRHPAPKKAED) show a composition bias toward basic and acidic residues. Residues 47 to 69 (GLKTSRNTDQRHPAPKKAEDQEL) form a disordered region. 3 cysteine pairs are disulfide-bonded: Cys139–Cys204, Cys182–Cys232, and Cys192–Cys234. Residue Asn148 is glycosylated (N-linked (GlcNAc...) asparagine).

The protein belongs to the NGF-beta family. As to quaternary structure, homodimer; non-covalently linked. Expressed by the venom gland.

Its subcellular location is the secreted. In terms of biological role, nerve growth factor is important for the development and maintenance of the sympathetic and sensory nervous systems. It stimulates division and differentiation of sympathetic and embryonic sensory neurons as well as basal forebrain cholinergic neurons in the brain. Its relevance in the snake venom is not clear. However, it has been shown to inhibit metalloproteinase-dependent proteolysis of platelet glycoprotein Ib alpha, suggesting a metalloproteinase inhibition to prevent metalloprotease autodigestion and/or protection against prey proteases. Binds a lipid between the two protein chains in the homodimer. The lipid-bound form promotes histamine relase from mouse mast cells, contrary to the lipid-free form. The chain is Venom nerve growth factor from Oxyuranus scutellatus scutellatus (Australian taipan).